A 407-amino-acid polypeptide reads, in one-letter code: Argininosuccinate synthase (407 aa).

ATP is bound by residues 11-19 and Ala-38; that span reads AYSGGLDTS. Positions 89 and 94 each coordinate L-citrulline. Residue Gly-119 participates in ATP binding. Residues Thr-121, Asn-125, and Asp-126 each coordinate L-aspartate. L-citrulline is bound at residue Asn-125. L-citrulline is bound by residues Arg-129, Ser-180, Ser-189, Glu-265, and Tyr-277.

The protein belongs to the argininosuccinate synthase family. Type 1 subfamily. In terms of assembly, homotetramer.

The protein localises to the cytoplasm. The catalysed reaction is L-citrulline + L-aspartate + ATP = 2-(N(omega)-L-arginino)succinate + AMP + diphosphate + H(+). Its pathway is amino-acid biosynthesis; L-arginine biosynthesis; L-arginine from L-ornithine and carbamoyl phosphate: step 2/3. In Magnetococcus marinus (strain ATCC BAA-1437 / JCM 17883 / MC-1), this protein is Argininosuccinate synthase.